A 177-amino-acid chain; its full sequence is Meiotically up-regulated gene 121 protein (177 aa).

The N-terminal stretch at 1-23 (MKGFVVISRFILTLFILITPGLA) is a signal peptide. N-linked (GlcNAc...) asparagine glycosylation occurs at asparagine 121.

It is found in the endoplasmic reticulum. The protein resides in the golgi apparatus. Has a role in meiosis. This Schizosaccharomyces pombe (strain 972 / ATCC 24843) (Fission yeast) protein is Meiotically up-regulated gene 121 protein (mug121).